Here is a 192-residue protein sequence, read N- to C-terminus: Ion-translocating oxidoreductase complex subunit A (192 aa).

A run of 6 helical transmembrane segments spans residues 5 to 25, 39 to 59, 65 to 85, 102 to 122, 134 to 154, and 171 to 191; these read ALIL…FLGL, TGMG…SYLV, APLG…AAVV, VLGI…VALL, ALYG…FASI, and AIAL…IGLV.

It belongs to the NqrDE/RnfAE family. The complex is composed of six subunits: RnfA, RnfB, RnfC, RnfD, RnfE and RnfG.

The protein localises to the cell inner membrane. Its function is as follows. Part of a membrane-bound complex that couples electron transfer with translocation of ions across the membrane. In Thioalkalivibrio sulfidiphilus (strain HL-EbGR7), this protein is Ion-translocating oxidoreductase complex subunit A.